A 325-amino-acid polypeptide reads, in one-letter code: Beta-ketoacyl-[acyl-carrier-protein] synthase III (325 aa).

Active-site residues include Cys-112 and His-250. The interval 251-255 is ACP-binding; that stretch reads QANSR. Asn-280 is an active-site residue.

The protein belongs to the thiolase-like superfamily. FabH family. As to quaternary structure, homodimer.

The protein resides in the cytoplasm. The catalysed reaction is malonyl-[ACP] + acetyl-CoA + H(+) = 3-oxobutanoyl-[ACP] + CO2 + CoA. It participates in lipid metabolism; fatty acid biosynthesis. Functionally, catalyzes the condensation reaction of fatty acid synthesis by the addition to an acyl acceptor of two carbons from malonyl-ACP. Catalyzes the first condensation reaction which initiates fatty acid synthesis and may therefore play a role in governing the total rate of fatty acid production. Possesses both acetoacetyl-ACP synthase and acetyl transacylase activities. Its substrate specificity determines the biosynthesis of branched-chain and/or straight-chain of fatty acids. The protein is Beta-ketoacyl-[acyl-carrier-protein] synthase III of Lactococcus lactis subsp. cremoris (strain SK11).